The primary structure comprises 394 residues: Elongation factor Tu (394 aa).

The tr-type G domain occupies 10–204 (LPHVNIGTIG…AVDEYIPTPT (195 aa)). Positions 19 to 26 (GHVDHGKT) are G1. 19 to 26 (GHVDHGKT) lines the GTP pocket. A Mg(2+)-binding site is contributed by T26. The segment at 60-64 (GITIN) is G2. A G3 region spans residues 81–84 (DCPG). GTP-binding positions include 81–85 (DCPGH) and 136–139 (NKCD). Residues 136-139 (NKCD) are G4. Residues 174-176 (SAL) form a G5 region.

This sequence belongs to the TRAFAC class translation factor GTPase superfamily. Classic translation factor GTPase family. EF-Tu/EF-1A subfamily. As to quaternary structure, monomer.

The protein localises to the cytoplasm. It catalyses the reaction GTP + H2O = GDP + phosphate + H(+). Its function is as follows. GTP hydrolase that promotes the GTP-dependent binding of aminoacyl-tRNA to the A-site of ribosomes during protein biosynthesis. This chain is Elongation factor Tu, found in Mesoplasma florum (strain ATCC 33453 / NBRC 100688 / NCTC 11704 / L1) (Acholeplasma florum).